The primary structure comprises 520 residues: MSSTVWILISILLATVGAVVGFFVRKSIAEAKINGAANEAKRILDEANREAEALKKEALLEAKDEIHTLRTEAELEIRDRRSELQKQENRLMQKEENLDRKDETLDKRELQLEKKEDSLVARQQQIEELESKVGELVQKQQTELERISNLTREQAKAIILGKVESEVSHEIAVMVKESEVRAKEEADKKAKEILSLAMQRCAADHVAETTVSVVNLPNDEMKGRIIGREGRNIRTLETLTGIDLIIDDTPEAVILSGFDPIRRETARIALDKLVQDGRIHPARIEEMVEKSRREVDEYIREVGEQTTFEVGVHGLHPDLIKILGRLKYRTSYGQNVLKHSMEVAYLTGLMAAELGEDEKLARRAGLLHDIGKAIDHEVEGSHVEIGVELATKYKEHPVVINSIASHHGDTEPTSIIAVLVAAADALSAARPGARSETLENYIRRLEKLEEISESYEGVEKSFAIQAGREVRILVKPDTIDDLEAHRLARDIRKRIENELDYPGHIKVTVIRETRAVEYAK.

Residues 4–24 (TVWILISILLATVGAVVGFFV) form a helical membrane-spanning segment. The 64-residue stretch at 210–273 (TVSVVNLPND…ETARIALDKL (64 aa)) folds into the KH domain. An HD domain is found at 336–429 (VLKHSMEVAY…VAAADALSAA (94 aa)).

It belongs to the RNase Y family.

It is found in the cell membrane. Its function is as follows. Endoribonuclease that initiates mRNA decay. In Bacillus cereus (strain ZK / E33L), this protein is Ribonuclease Y.